The sequence spans 446 residues: tRNA wybutosine-synthesizing protein 2 homolog (446 aa).

S-adenosyl-L-methionine is bound by residues Ser208, Lys215, Glu255, and Asp283–Asn284.

This sequence belongs to the class I-like SAM-binding methyltransferase superfamily. TRM5/TYW2 family.

The enzyme catalyses 4-demethylwyosine(37) in tRNA(Phe) + S-adenosyl-L-methionine = 4-demethyl-7-[(3S)-3-amino-3-carboxypropyl]wyosine(37) in tRNA(Phe) + S-methyl-5'-thioadenosine + H(+). The protein operates within tRNA modification; wybutosine-tRNA(Phe) biosynthesis. In terms of biological role, S-adenosyl-L-methionine-dependent transferase that acts as a component of the wybutosine biosynthesis pathway. Wybutosine is a hyper modified guanosine with a tricyclic base found at the 3'-position adjacent to the anticodon of eukaryotic phenylalanine tRNA. Catalyzes the transfer of the alpha-amino-alpha-carboxypropyl (acp) group from S-adenosyl-L-methionine to the C-7 position of 4-demethylwyosine (imG-14) to produce wybutosine-86. In Mus musculus (Mouse), this protein is tRNA wybutosine-synthesizing protein 2 homolog (Trmt12).